The following is a 394-amino-acid chain: uncharacterized protein (394 aa).

12 helical membrane-spanning segments follow: residues 13–33 (LITT…TTMI), 35–55 (MAPT…VLPT), 73–95 (TTMT…TLTV), 110–130 (ALTV…HMVL), 152–172 (IHMV…PTVL), 179–198 (LMVL…TLTV), 216–236 (VLLA…TVLP), 241–261 (VLMV…HMVL), 267–287 (VLMV…PTVL), 293–313 (VLMV…TLTV), 340–360 (MMTL…VTTI), and 372–392 (ILLC…YVSA).

Its subcellular location is the membrane. This is an uncharacterized protein from Saccharomyces cerevisiae (strain ATCC 204508 / S288c) (Baker's yeast).